We begin with the raw amino-acid sequence, 623 residues long: Glutathione import ATP-binding protein GsiA (623 aa).

ABC transporter domains follow at residues 15-269 (VSGL…QTLL) and 325-564 (LRSG…RKLM). Residues 49 to 56 (GESGSGKS) and 357 to 364 (GESGSGKS) each bind ATP.

The protein belongs to the ABC transporter superfamily. Glutathione importer (TC 3.A.1.5.11) family. In terms of assembly, the complex is composed of two ATP-binding proteins (GsiA), two transmembrane proteins (GsiC and GsiD) and a solute-binding protein (GsiB).

Its subcellular location is the cell inner membrane. It catalyses the reaction glutathione(out) + ATP + H2O = glutathione(in) + ADP + phosphate + H(+). Its function is as follows. Part of the ABC transporter complex GsiABCD involved in glutathione import. Responsible for energy coupling to the transport system. The polypeptide is Glutathione import ATP-binding protein GsiA (Salmonella typhi).